A 342-amino-acid chain; its full sequence is Phosphoribosylformylglycinamidine cyclo-ligase (342 aa).

This sequence belongs to the AIR synthase family.

Its subcellular location is the cytoplasm. The catalysed reaction is 2-formamido-N(1)-(5-O-phospho-beta-D-ribosyl)acetamidine + ATP = 5-amino-1-(5-phospho-beta-D-ribosyl)imidazole + ADP + phosphate + H(+). It participates in purine metabolism; IMP biosynthesis via de novo pathway; 5-amino-1-(5-phospho-D-ribosyl)imidazole from N(2)-formyl-N(1)-(5-phospho-D-ribosyl)glycinamide: step 2/2. This is Phosphoribosylformylglycinamidine cyclo-ligase from Staphylococcus aureus (strain MSSA476).